A 245-amino-acid chain; its full sequence is Ribosomal RNA large subunit methyltransferase E (245 aa).

A disordered region spans residues 1–25; it reads MTKSPIGGNRSGRKLGQKVKKGKLK. Basic residues predominate over residues 11–25; the sequence is SGRKLGQKVKKGKLK. Gly-81, Trp-83, Asp-104, Asp-120, and Asp-144 together coordinate S-adenosyl-L-methionine. Catalysis depends on Lys-184, which acts as the Proton acceptor.

Belongs to the class I-like SAM-binding methyltransferase superfamily. RNA methyltransferase RlmE family.

Its subcellular location is the cytoplasm. It carries out the reaction uridine(2552) in 23S rRNA + S-adenosyl-L-methionine = 2'-O-methyluridine(2552) in 23S rRNA + S-adenosyl-L-homocysteine + H(+). In terms of biological role, specifically methylates the uridine in position 2552 of 23S rRNA at the 2'-O position of the ribose in the fully assembled 50S ribosomal subunit. This Sinorhizobium fredii (strain NBRC 101917 / NGR234) protein is Ribosomal RNA large subunit methyltransferase E.